Here is a 209-residue protein sequence, read N- to C-terminus: tRNA (guanine-N(7)-)-methyltransferase (209 aa).

Positions 35, 60, 87, and 113 each coordinate S-adenosyl-L-methionine. Asp-113 is an active-site residue. Residues Lys-117 and Asp-149 each coordinate substrate.

The protein belongs to the class I-like SAM-binding methyltransferase superfamily. TrmB family.

It carries out the reaction guanosine(46) in tRNA + S-adenosyl-L-methionine = N(7)-methylguanosine(46) in tRNA + S-adenosyl-L-homocysteine. It participates in tRNA modification; N(7)-methylguanine-tRNA biosynthesis. Its function is as follows. Catalyzes the formation of N(7)-methylguanine at position 46 (m7G46) in tRNA. This chain is tRNA (guanine-N(7)-)-methyltransferase, found in Prochlorococcus marinus (strain MIT 9215).